We begin with the raw amino-acid sequence, 220 residues long: Deoxyribose-phosphate aldolase (220 aa).

Asp89 serves as the catalytic Proton donor/acceptor. Lys150 acts as the Schiff-base intermediate with acetaldehyde in catalysis. The active-site Proton donor/acceptor is the Lys182.

This sequence belongs to the DeoC/FbaB aldolase family. DeoC type 1 subfamily.

The protein resides in the cytoplasm. It carries out the reaction 2-deoxy-D-ribose 5-phosphate = D-glyceraldehyde 3-phosphate + acetaldehyde. The protein operates within carbohydrate degradation; 2-deoxy-D-ribose 1-phosphate degradation; D-glyceraldehyde 3-phosphate and acetaldehyde from 2-deoxy-alpha-D-ribose 1-phosphate: step 2/2. In terms of biological role, catalyzes a reversible aldol reaction between acetaldehyde and D-glyceraldehyde 3-phosphate to generate 2-deoxy-D-ribose 5-phosphate. This is Deoxyribose-phosphate aldolase from Mycoplasmoides pirum (Mycoplasma pirum).